The following is a 413-amino-acid chain: Hemolin (413 aa).

An N-terminal signal peptide occupies residues 1–19; that stretch reads MAFKSIAVLSACIIVGSAL. 4 consecutive Ig-like C2-type domains span residues 25-112, 122-211, 233-322, and 327-413; these read PVLK…RVIS, PAKT…EEVV, PQYV…LKLT, and PKYE…VQVN. Cystine bridges form between Cys46–Cys97, Cys140–Cys199, Cys252–Cys305, and Cys349–Cys395. Asn283 is a glycosylation site (N-linked (GlcNAc...) asparagine).

The protein belongs to the hemolin family. As to expression, hemolymph.

The protein resides in the secreted. It localises to the extracellular space. Functionally, insect-immune protein. Forms a protein complex at the bacterial surface. Can inhibit hemocyte aggregation. This chain is Hemolin, found in Hyalophora cecropia (Cecropia moth).